Here is a 196-residue protein sequence, read N- to C-terminus: ATP-dependent Clp protease proteolytic subunit (196 aa).

Serine 98 functions as the Nucleophile in the catalytic mechanism. Histidine 123 is an active-site residue.

It belongs to the peptidase S14 family. Fourteen ClpP subunits assemble into 2 heptameric rings which stack back to back to give a disk-like structure with a central cavity, resembling the structure of eukaryotic proteasomes.

It is found in the cytoplasm. The catalysed reaction is Hydrolysis of proteins to small peptides in the presence of ATP and magnesium. alpha-casein is the usual test substrate. In the absence of ATP, only oligopeptides shorter than five residues are hydrolyzed (such as succinyl-Leu-Tyr-|-NHMec, and Leu-Tyr-Leu-|-Tyr-Trp, in which cleavage of the -Tyr-|-Leu- and -Tyr-|-Trp bonds also occurs).. Functionally, cleaves peptides in various proteins in a process that requires ATP hydrolysis. Has a chymotrypsin-like activity. Plays a major role in the degradation of misfolded proteins. ClpXP is involved in the complete degradation of the Site-2 clipped anti-sigma-W factor RsiW. This results in the release of SigW and the transcription activation of the genes under the control of the sigma-W factor. The protein is ATP-dependent Clp protease proteolytic subunit of Geobacillus kaustophilus (strain HTA426).